The chain runs to 112 residues: Protein Churchill (112 aa).

Positions 2, 5, 30, 33, 59, 61, 64, 66, 71, 88, and 91 each coordinate Zn(2+).

It belongs to the Churchill family.

In terms of biological role, transcriptional activator that mediates FGF signaling during neural development. Plays a role in the regulation of cell movement. Does not bind DNA by itself. In Bos taurus (Bovine), this protein is Protein Churchill (CHURC1).